The following is an 89-amino-acid chain: Small ribosomal subunit protein uS15 (89 aa).

The protein belongs to the universal ribosomal protein uS15 family. As to quaternary structure, part of the 30S ribosomal subunit. Forms a bridge to the 50S subunit in the 70S ribosome, contacting the 23S rRNA.

In terms of biological role, one of the primary rRNA binding proteins, it binds directly to 16S rRNA where it helps nucleate assembly of the platform of the 30S subunit by binding and bridging several RNA helices of the 16S rRNA. Functionally, forms an intersubunit bridge (bridge B4) with the 23S rRNA of the 50S subunit in the ribosome. The sequence is that of Small ribosomal subunit protein uS15 from Dechloromonas aromatica (strain RCB).